Reading from the N-terminus, the 51-residue chain is Large ribosomal subunit protein eL39 (51 aa).

Belongs to the eukaryotic ribosomal protein eL39 family.

This is Large ribosomal subunit protein eL39 (rpl39e) from Pyrococcus horikoshii (strain ATCC 700860 / DSM 12428 / JCM 9974 / NBRC 100139 / OT-3).